Reading from the N-terminus, the 392-residue chain is Formate-dependent phosphoribosylglycinamide formyltransferase (392 aa).

Residues 22 to 23 and Glu82 contribute to the N(1)-(5-phospho-beta-D-ribosyl)glycinamide site; that span reads EL. ATP-binding positions include Arg114, Lys155, 160–165, 195–198, and Glu203; these read SSGHGQ and EGFI. An ATP-grasp domain is found at 119–307; the sequence is RLAAEELGLK…QFALHARAIL (189 aa). Residues Glu266 and Glu278 each contribute to the Mg(2+) site. N(1)-(5-phospho-beta-D-ribosyl)glycinamide contacts are provided by residues Asp285, Lys355, and 362-363; that span reads RR.

Belongs to the PurK/PurT family. As to quaternary structure, homodimer.

Its subcellular location is the cell inner membrane. The catalysed reaction is N(1)-(5-phospho-beta-D-ribosyl)glycinamide + formate + ATP = N(2)-formyl-N(1)-(5-phospho-beta-D-ribosyl)glycinamide + ADP + phosphate + H(+). It functions in the pathway purine metabolism; IMP biosynthesis via de novo pathway; N(2)-formyl-N(1)-(5-phospho-D-ribosyl)glycinamide from N(1)-(5-phospho-D-ribosyl)glycinamide (formate route): step 1/1. Functionally, involved in the de novo purine biosynthesis. Catalyzes the transfer of formate to 5-phospho-ribosyl-glycinamide (GAR), producing 5-phospho-ribosyl-N-formylglycinamide (FGAR). Formate is provided by PurU via hydrolysis of 10-formyl-tetrahydrofolate. The protein is Formate-dependent phosphoribosylglycinamide formyltransferase of Mannheimia haemolytica (Pasteurella haemolytica).